The chain runs to 238 residues: Histone H1 (238 aa).

Composition is skewed to low complexity over residues 21 to 34 (AAVD…AKAP) and 123 to 132 (AKAPAAVKPK). 2 disordered regions span residues 21-57 (AAVD…AHPS) and 123-238 (AKAP…KAKK). In terms of domain architecture, H15 spans 54–124 (AHPSYAEMVS…KVKGSYKLAK (71 aa)). The segment covering 133–197 (TATKKKPAAK…AAKPKAKAAA (65 aa)) has biased composition (basic residues). 2 stretches are compositionally biased toward low complexity: residues 198 to 208 (KKAPAAATPKK) and 217 to 230 (KRAT…PAKK).

Belongs to the histone H1/H5 family.

The protein resides in the nucleus. Its subcellular location is the chromosome. Histones H1 are necessary for the condensation of nucleosome chains into higher-order structures. The sequence is that of Histone H1 from Triticum aestivum (Wheat).